The chain runs to 117 residues: Large ribosomal subunit protein bL17 (117 aa).

It belongs to the bacterial ribosomal protein bL17 family. Part of the 50S ribosomal subunit. Contacts protein L32.

This chain is Large ribosomal subunit protein bL17, found in Exiguobacterium sp. (strain ATCC BAA-1283 / AT1b).